The primary structure comprises 231 residues: Putative N-acetylmannosamine-6-phosphate 2-epimerase (231 aa).

It belongs to the NanE family.

It catalyses the reaction an N-acyl-D-glucosamine 6-phosphate = an N-acyl-D-mannosamine 6-phosphate. It participates in amino-sugar metabolism; N-acetylneuraminate degradation; D-fructose 6-phosphate from N-acetylneuraminate: step 3/5. In terms of biological role, converts N-acetylmannosamine-6-phosphate (ManNAc-6-P) to N-acetylglucosamine-6-phosphate (GlcNAc-6-P). The sequence is that of Putative N-acetylmannosamine-6-phosphate 2-epimerase from Latilactobacillus sakei subsp. sakei (strain 23K) (Lactobacillus sakei subsp. sakei).